A 420-amino-acid polypeptide reads, in one-letter code: 3-phosphoshikimate 1-carboxyvinyltransferase (420 aa).

Positions 20, 21, and 25 each coordinate 3-phosphoshikimate. A phosphoenolpyruvate-binding site is contributed by lysine 20. Position 119 (arginine 119) interacts with phosphoenolpyruvate. Residues serine 161, serine 162, glutamine 163, serine 189, aspartate 303, glutamine 326, and lysine 330 each coordinate 3-phosphoshikimate. A phosphoenolpyruvate-binding site is contributed by glutamine 163. The Proton acceptor role is filled by aspartate 303. The phosphoenolpyruvate site is built by arginine 334, arginine 375, and lysine 400.

Belongs to the EPSP synthase family. As to quaternary structure, monomer.

Its subcellular location is the cytoplasm. The catalysed reaction is 3-phosphoshikimate + phosphoenolpyruvate = 5-O-(1-carboxyvinyl)-3-phosphoshikimate + phosphate. The protein operates within metabolic intermediate biosynthesis; chorismate biosynthesis; chorismate from D-erythrose 4-phosphate and phosphoenolpyruvate: step 6/7. Catalyzes the transfer of the enolpyruvyl moiety of phosphoenolpyruvate (PEP) to the 5-hydroxyl of shikimate-3-phosphate (S3P) to produce enolpyruvyl shikimate-3-phosphate and inorganic phosphate. The polypeptide is 3-phosphoshikimate 1-carboxyvinyltransferase (Dehalococcoides mccartyi (strain ATCC BAA-2100 / JCM 16839 / KCTC 5957 / BAV1)).